The sequence spans 244 residues: Eukaryotic translation initiation factor 4E type 1B (244 aa).

Basic and acidic residues predominate over residues 1 to 26 (MNKVEGGGHKEEVVVKEKEVVKEKPS). The interval 1-57 (MNKVEGGGHKEEVVVKEKEVVKEKPSEATAEGVQAGEAKDLPGSLKTQRRKAHREHP) is disordered. An EIF4EBP1/2/3 binding region spans residues 65 to 68 (HPLQ). 84-85 (WQ) is an mRNA binding site. The EIF4EBP1/2/3 binding stretch occupies residues 101–105 (WAVYS). Residue 130 to 131 (WE) participates in mRNA binding. The interval 160 to 167 (ETLLCLVG) is EIF4EBP1/2/3 binding. Residues 185 to 190 (RTKRDK) and 233 to 235 (AKS) each bind mRNA.

It belongs to the eukaryotic initiation factor 4E family. EIF4F is a multi-subunit complex, the composition of which varies with external and internal environmental conditions. It is composed of at least EIF4A, EIF4E and EIF4G.

Recognizes and binds the 7-methylguanosine-containing mRNA cap during an early step in the initiation of protein synthesis and facilitates ribosome binding by inducing the unwinding of the mRNAs secondary structures. The sequence is that of Eukaryotic translation initiation factor 4E type 1B (Eif4e1b) from Mus musculus (Mouse).